The sequence spans 251 residues: MAKEALKTLQSMFGEMVASFVFGFAVYSAILGSSISQSSADKVIVGLTVGFSGIGVIYSFCDVTIAHFNPAITLAAILTSKIDVLQGLGYMLAQYIGFMLAVCALLVCSPVEYKETLDTIRPGPTDFGATSLNVFFAEFFLTAIFVHIVFATAVNPYKPKVDTEGKFVDPDEKEPVDRRITAPLCIGLTLGFLAFMGLASSGGAFNPGLTFAPMAMSNTWSHFWIYLGGQYLGGLTGGLLQVLVLYKLSSD.

Topologically, residues 1–11 (MAKEALKTLQS) are cytoplasmic. A helical transmembrane segment spans residues 12–32 (MFGEMVASFVFGFAVYSAILG). Residues 33–42 (SSISQSSADK) lie on the Extracellular side of the membrane. A helical transmembrane segment spans residues 43–63 (VIVGLTVGFSGIGVIYSFCDV). Topologically, residues 64 to 86 (TIAHFNPAITLAAILTSKIDVLQ) are cytoplasmic. The NPA signature appears at 69–71 (NPA). The helical transmembrane segment at 87–107 (GLGYMLAQYIGFMLAVCALLV) threads the bilayer. The Extracellular segment spans residues 108–133 (CSPVEYKETLDTIRPGPTDFGATSLN). A helical membrane pass occupies residues 134–154 (VFFAEFFLTAIFVHIVFATAV). Residues 155-179 (NPYKPKVDTEGKFVDPDEKEPVDRR) lie on the Cytoplasmic side of the membrane. The helical transmembrane segment at 180–200 (ITAPLCIGLTLGFLAFMGLAS) threads the bilayer. The Extracellular segment spans residues 201–224 (SGGAFNPGLTFAPMAMSNTWSHFW). The NPG signature appears at 206–208 (NPG). Residues 225-245 (IYLGGQYLGGLTGGLLQVLVL) form a helical membrane-spanning segment. Residues 246–251 (YKLSSD) lie on the Cytoplasmic side of the membrane.

It belongs to the MIP/aquaporin (TC 1.A.8) family.

It localises to the cell membrane. Its function is as follows. Water channel required to facilitate the transport of water across membranes. Involved in osmotolerance. In Encephalitozoon intestinalis (Microsporidian parasite), this protein is Aquaporin (AQP).